Reading from the N-terminus, the 100-residue chain is Internal protein II (100 aa).

Positions 1–10 (MKTYQEFIAE) are excised as a propeptide.

In terms of biological role, internal protein II, which has a histone-like character, binds weakly to other components of the assembly core during an early stage of bacteriophage head morphogenesis. In Enterobacteria phage T4 (Bacteriophage T4), this protein is Internal protein II (ipi2).